Here is a 295-residue protein sequence, read N- to C-terminus: Pyridoxal 5'-phosphate synthase subunit PdxS (295 aa).

Asp25 lines the D-ribose 5-phosphate pocket. Residue Lys82 is the Schiff-base intermediate with D-ribose 5-phosphate of the active site. A D-ribose 5-phosphate-binding site is contributed by Gly154. Arg166 serves as a coordination point for D-glyceraldehyde 3-phosphate. D-ribose 5-phosphate is bound by residues Gly215 and 236–237; that span reads GS.

It belongs to the PdxS/SNZ family. As to quaternary structure, in the presence of PdxT, forms a dodecamer of heterodimers.

The enzyme catalyses aldehydo-D-ribose 5-phosphate + D-glyceraldehyde 3-phosphate + L-glutamine = pyridoxal 5'-phosphate + L-glutamate + phosphate + 3 H2O + H(+). It functions in the pathway cofactor biosynthesis; pyridoxal 5'-phosphate biosynthesis. Functionally, catalyzes the formation of pyridoxal 5'-phosphate from ribose 5-phosphate (RBP), glyceraldehyde 3-phosphate (G3P) and ammonia. The ammonia is provided by the PdxT subunit. Can also use ribulose 5-phosphate and dihydroxyacetone phosphate as substrates, resulting from enzyme-catalyzed isomerization of RBP and G3P, respectively. The chain is Pyridoxal 5'-phosphate synthase subunit PdxS from Staphylococcus aureus (strain Mu3 / ATCC 700698).